A 1009-amino-acid polypeptide reads, in one-letter code: Translation initiation factor IF-2 (1009 aa).

Residues 1–415 (MSDENENGRP…EREKEKRRGG (415 aa)) form a disordered region. A compositionally biased stretch (basic and acidic residues) spans 94–110 (EELRARQRVVDAAREAQ). A compositionally biased stretch (low complexity) spans 111 to 121 (ARQVAEQAAAE). The span at 122–136 (ARARAAQEAAQREAA) shows a compositional bias: basic and acidic residues. The segment covering 137–146 (AKAAAERAAA) has biased composition (low complexity). A compositionally biased stretch (pro residues) spans 147-174 (APPPVAQAPAAPAPAAPVTPPPAAPQAP). Residues 175–189 (RPVAQAPVAPSAPRQ) show a composition bias toward low complexity. Composition is skewed to basic and acidic residues over residues 208 to 218 (EPSRDRRDDRP) and 251 to 287 (PRPEGDRPRGPRPDGDRPQGDRGGYRGDRPQGDRPQG). A compositionally biased stretch (pro residues) spans 311–320 (GGPPRGPRPG). Basic and acidic residues-rich tracts occupy residues 346–358 (MDRRPDEDDDRRK) and 403–415 (RAREREKEKRRGG). The region spanning 505–675 (LRPPVVTIMG…LLQAEVLDLK (171 aa)) is the tr-type G domain. The tract at residues 514-521 (GHVDHGKT) is G1. A GTP-binding site is contributed by 514 to 521 (GHVDHGKT). Residues 539 to 543 (GITQH) are G2. The tract at residues 561–564 (DTPG) is G3. GTP is bound by residues 561–565 (DTPGH) and 615–618 (NKMD). The G4 stretch occupies residues 615–618 (NKMD). The tract at residues 651-653 (SAK) is G5.

It belongs to the TRAFAC class translation factor GTPase superfamily. Classic translation factor GTPase family. IF-2 subfamily.

Its subcellular location is the cytoplasm. Its function is as follows. One of the essential components for the initiation of protein synthesis. Protects formylmethionyl-tRNA from spontaneous hydrolysis and promotes its binding to the 30S ribosomal subunits. Also involved in the hydrolysis of GTP during the formation of the 70S ribosomal complex. This chain is Translation initiation factor IF-2, found in Caulobacter vibrioides (strain ATCC 19089 / CIP 103742 / CB 15) (Caulobacter crescentus).